A 224-amino-acid polypeptide reads, in one-letter code: Ribonuclease 3 (224 aa).

An RNase III domain is found at Leu-5–Gly-127. Residue Glu-40 participates in Mg(2+) binding. The active site involves Asp-44. 2 residues coordinate Mg(2+): Asp-113 and Glu-116. Residue Glu-116 is part of the active site. The 71-residue stretch at Asp-154–Gly-224 folds into the DRBM domain.

It belongs to the ribonuclease III family. In terms of assembly, homodimer. Mg(2+) serves as cofactor.

The protein resides in the cytoplasm. It carries out the reaction Endonucleolytic cleavage to 5'-phosphomonoester.. Its function is as follows. Digests double-stranded RNA. Involved in the processing of primary rRNA transcript to yield the immediate precursors to the large and small rRNAs (23S and 16S). Processes some mRNAs, and tRNAs when they are encoded in the rRNA operon. Processes pre-crRNA and tracrRNA of type II CRISPR loci if present in the organism. In Legionella pneumophila (strain Paris), this protein is Ribonuclease 3.